A 458-amino-acid chain; its full sequence is Photosystem II CP43 reaction center protein (458 aa).

Helical transmembrane passes span 54–78, 119–140, 163–185, 240–260, and 276–297; these read LFEV…PHLA, LRGP…KDKN, KAMF…RVIT, RPFN…LSYS, and WFNN…ASQA. Glutamate 352 contacts [CaMn4O5] cluster. Residues 432-456 traverse the membrane as a helical segment; that stretch reads RARAAAAGFEKGIDRKTEPVLSMSD.

Belongs to the PsbB/PsbC family. PsbC subfamily. In terms of assembly, PSII is composed of 1 copy each of membrane proteins PsbA, PsbB, PsbC, PsbD, PsbE, PsbF, PsbH, PsbI, PsbJ, PsbK, PsbL, PsbM, PsbT, PsbX, PsbY, PsbZ, Psb30/Ycf12, peripheral proteins PsbO, CyanoQ (PsbQ), PsbU, PsbV and a large number of cofactors. It forms dimeric complexes. Binds multiple chlorophylls and provides some of the ligands for the Ca-4Mn-5O cluster of the oxygen-evolving complex. It may also provide a ligand for a Cl- that is required for oxygen evolution. PSII binds additional chlorophylls, carotenoids and specific lipids. serves as cofactor.

It localises to the cellular thylakoid membrane. One of the components of the core complex of photosystem II (PSII). It binds chlorophyll and helps catalyze the primary light-induced photochemical processes of PSII. PSII is a light-driven water:plastoquinone oxidoreductase, using light energy to abstract electrons from H(2)O, generating O(2) and a proton gradient subsequently used for ATP formation. The protein is Photosystem II CP43 reaction center protein of Prochlorothrix hollandica.